The primary structure comprises 261 residues: Acetylglutamate kinase (261 aa).

Substrate-binding positions include 48–49 (GG), Arg70, and Asn164.

It belongs to the acetylglutamate kinase family. ArgB subfamily.

The protein resides in the cytoplasm. It catalyses the reaction N-acetyl-L-glutamate + ATP = N-acetyl-L-glutamyl 5-phosphate + ADP. It functions in the pathway amino-acid biosynthesis; L-arginine biosynthesis; N(2)-acetyl-L-ornithine from L-glutamate: step 2/4. Its function is as follows. Catalyzes the ATP-dependent phosphorylation of N-acetyl-L-glutamate. The sequence is that of Acetylglutamate kinase from Roseiflexus sp. (strain RS-1).